We begin with the raw amino-acid sequence, 717 residues long: MQKFTFFVSCAKGIELLLKDELERLGISSQEKLAGVEFEGSIKDAYKVCIYSYLASQVMLKVATDKVINQQDLYEFISSINWMDYFAVDKTFKIIISGKHYDFNNTMFVSQKTKDAIVDQFRNVINQRPNIDTENPDNVIKLHLHKQFVNVFLCLNIDSLHKRSYRQFQGQAPLKESLAAAILIKAGWLEELKKHQPILIDPMCGSGTILIEAALMAKNIAPVLLNKEFKIFNSKFHNQELWDNLLEIAKNSQKVTNAIICGFDIDNNVLDKAQRNIYQAGVEDVVTVKRQDIRDLENEFESEGLIVTNPPYGERLYGDQLDELLDIFNGFGDRLSQDFYGWKVAVLTSFADSIKEMQLRTTERNKFYNGAIETILYQFKINEHAKFKHETQLEKNIRIAEASAQKSDEHIDFANKLKKNLKSLKPWLKQTGLECYRLYDADIPTFAVAVDVYSEHIFLQEYRADATIDQNIAKQRFYQAIYQIHKTLDIKYENIHTRVRQRQKGKEQYQKENDKNKFHIINEFDAKFYVNFDDYLDTGIFLDHRKIRQLVAKAAKNKTLLNLFSYTCTASVHAALKGAKTTSVDMSNTYLEWGKNNFTLNNIDAKKHSFIQADCISWLKTNKDKFDVIFLDPPTFSNSKRMDDILDIQRDHELLINLAMDSLKKDGILYFSNNYRRFKMSPQILEKFNCENIDKICLSRDFLSNKNIHNCWEIKYK.

A THUMP domain is found at 44–155 (DAYKVCIYSY…KQFVNVFLCL (112 aa)).

The protein belongs to the methyltransferase superfamily. RlmKL family.

The protein localises to the cytoplasm. It carries out the reaction guanosine(2445) in 23S rRNA + S-adenosyl-L-methionine = N(2)-methylguanosine(2445) in 23S rRNA + S-adenosyl-L-homocysteine + H(+). It catalyses the reaction guanosine(2069) in 23S rRNA + S-adenosyl-L-methionine = N(2)-methylguanosine(2069) in 23S rRNA + S-adenosyl-L-homocysteine + H(+). Functionally, specifically methylates the guanine in position 2445 (m2G2445) and the guanine in position 2069 (m7G2069) of 23S rRNA. This is Ribosomal RNA large subunit methyltransferase K/L from Francisella tularensis subsp. holarctica (strain FTNF002-00 / FTA).